The sequence spans 124 residues: Large ribosomal subunit protein uL22 (124 aa).

The protein belongs to the universal ribosomal protein uL22 family. Part of the 50S ribosomal subunit.

Its function is as follows. This protein binds specifically to 23S rRNA; its binding is stimulated by other ribosomal proteins, e.g. L4, L17, and L20. It is important during the early stages of 50S assembly. It makes multiple contacts with different domains of the 23S rRNA in the assembled 50S subunit and ribosome. Functionally, the globular domain of the protein is located near the polypeptide exit tunnel on the outside of the subunit, while an extended beta-hairpin is found that lines the wall of the exit tunnel in the center of the 70S ribosome. This is Large ribosomal subunit protein uL22 from Campylobacter lari (strain RM2100 / D67 / ATCC BAA-1060).